We begin with the raw amino-acid sequence, 472 residues long: Glutamate--tRNA ligase (472 aa).

A 'HIGH' region motif is present at residues 9–19 (PSPTGPLHIGS). Positions 237–241 (KLSKR) match the 'KMSKS' region motif. K240 contributes to the ATP binding site.

Belongs to the class-I aminoacyl-tRNA synthetase family. Glutamate--tRNA ligase type 1 subfamily. Monomer.

It localises to the cytoplasm. It catalyses the reaction tRNA(Glu) + L-glutamate + ATP = L-glutamyl-tRNA(Glu) + AMP + diphosphate. Functionally, catalyzes the attachment of glutamate to tRNA(Glu) in a two-step reaction: glutamate is first activated by ATP to form Glu-AMP and then transferred to the acceptor end of tRNA(Glu). The polypeptide is Glutamate--tRNA ligase (Buchnera aphidicola subsp. Baizongia pistaciae (strain Bp)).